The following is a 213-amino-acid chain: Ephrin-A2 (213 aa).

Positions 1–24 (MAPAQRPLLPLLLLLLPLPPPPFA) are cleaved as a signal peptide. Positions 34–174 (SDRYAVYWNR…RLKVYVRPTN (141 aa)) constitute an Ephrin RBD domain. An N-linked (GlcNAc...) asparagine glycan is attached at asparagine 42. Disulfide bonds link cysteine 73–cysteine 114 and cysteine 102–cysteine 163. N-linked (GlcNAc...) asparagine glycans are attached at residues asparagine 174 and asparagine 188. The GPI-anchor amidated asparagine moiety is linked to residue asparagine 188. Positions 189–213 (NSCSSPGGCRLFLSTIPVLWTLLGS) are cleaved as a propeptide — removed in mature form.

This sequence belongs to the ephrin family. As to quaternary structure, binds to the receptor tyrosine kinases EPHA3, EPHA4 and EPHA5. Interacts with EPHA8; activates EPHA8.

It localises to the cell membrane. Its function is as follows. Cell surface GPI-bound ligand for Eph receptors, a family of receptor tyrosine kinases which are crucial for migration, repulsion and adhesion during neuronal, vascular and epithelial development. Binds promiscuously Eph receptors residing on adjacent cells, leading to contact-dependent bidirectional signaling into neighboring cells. The signaling pathway downstream of the receptor is referred to as forward signaling while the signaling pathway downstream of the ephrin ligand is referred to as reverse signaling. With the EPHA2 receptor may play a role in bone remodeling through regulation of osteoclastogenesis and osteoblastogenesis. The protein is Ephrin-A2 (EFNA2) of Homo sapiens (Human).